We begin with the raw amino-acid sequence, 589 residues long: Proton pump-interactor 2 (589 aa).

Positions 205 to 245 (EDSLAEKEASINRVKSMAVELNEVKKELDAITWKINHLSDK) form a coiled coil. 4 stretches are compositionally biased toward basic and acidic residues: residues 370–383 (KGGE…REDS), 395–408 (TDKR…KAMD), 426–450 (VYEK…REEQ), and 504–534 (ESDH…KERS). 2 disordered regions span residues 370-450 (KGGE…REEQ) and 485-534 (KECE…KERS). Residues 431-500 (KKEEEEVDEE…AKKKAAANSS (70 aa)) are a coiled coil. The chain crosses the membrane as a helical span at residues 568-588 (WVWGLSSAALAVALFLVVLLL).

Belongs to the plant Proton pump-interactor protein family. As to expression, expressed in seedlings and flowers.

Its subcellular location is the cell membrane. The protein localises to the endoplasmic reticulum membrane. May regulate plasma membrane ATPase activity. The polypeptide is Proton pump-interactor 2 (PPI2) (Arabidopsis thaliana (Mouse-ear cress)).